We begin with the raw amino-acid sequence, 175 residues long: DM domain-containing protein mab-23 (175 aa).

Positions 8 to 56 (CQLCANHGIFNQPKKGHKQKCPYRTCPCSLCALNTKRRALDQIERQLKH) form a DNA-binding region, DM. The interval 58 to 93 (NEPMTGQTATSMASPTPECPLSPTTPKMTPHTPTSG) is disordered. Over residues 59–71 (EPMTGQTATSMAS) the composition is skewed to polar residues. The segment covering 81 to 91 (TTPKMTPHTPT) has biased composition (low complexity).

In terms of tissue distribution, expressed in a limited number of non-sex-specific tissues in males, including 6-8 unidentified neurons of the head, ventral body wall muscle, and the PHCL/R neurons.

Its subcellular location is the nucleus. Probable transcription factor that plays a role in the development of the dopaminergic neurons of the male-specific genital sensilla (simple sense organs) known as rays, by negatively regulating the activity of the transcription factor ast-1. Involved in male mating behavior, probably as a result of a role in the differentiation of male-specific diagonal muscles. Required for development of the male proctodeum. May be dispensable in hermaphrodites. The protein is DM domain-containing protein mab-23 of Caenorhabditis elegans.